We begin with the raw amino-acid sequence, 238 residues long: uncharacterized protein (238 aa).

It belongs to the HyuE racemase family.

This is an uncharacterized protein from Schizosaccharomyces pombe (strain 972 / ATCC 24843) (Fission yeast).